The following is a 338-amino-acid chain: Tryptophan--tRNA ligase (338 aa).

ATP-binding positions include 11 to 13 (QPS) and 19 to 20 (GN). The short motif at 12–20 (PSGELSIGN) is the 'HIGH' region element. Asp135 contributes to the L-tryptophan binding site. ATP is bound by residues 147 to 149 (GSD), Val189, and 198 to 202 (KMSKS). Positions 198 to 202 (KMSKS) match the 'KMSKS' region motif.

It belongs to the class-I aminoacyl-tRNA synthetase family. Homodimer.

It localises to the cytoplasm. It catalyses the reaction tRNA(Trp) + L-tryptophan + ATP = L-tryptophyl-tRNA(Trp) + AMP + diphosphate + H(+). Its function is as follows. Catalyzes the attachment of tryptophan to tRNA(Trp). This is Tryptophan--tRNA ligase from Vibrio parahaemolyticus serotype O3:K6 (strain RIMD 2210633).